We begin with the raw amino-acid sequence, 336 residues long: DNA polymerase III subunit delta' (336 aa).

In terms of assembly, DNA polymerase III contains a core (composed of alpha, epsilon and theta chains) that associates with a tau subunit. This core dimerizes to form the POLIII' complex. PolIII' associates with the gamma complex (composed of gamma, delta, delta', psi and chi chains) and with the beta chain to form the complete DNA polymerase III complex.

It carries out the reaction DNA(n) + a 2'-deoxyribonucleoside 5'-triphosphate = DNA(n+1) + diphosphate. DNA polymerase III is a complex, multichain enzyme responsible for most of the replicative synthesis in bacteria. This DNA polymerase also exhibits 3' to 5' exonuclease activity. This chain is DNA polymerase III subunit delta' (holB), found in Buchnera aphidicola subsp. Baizongia pistaciae (strain Bp).